The primary structure comprises 590 residues: Myo-inositol transporter 3C (590 aa).

Over 1-63 (MSRTPSSLDK…GEDKVTPYLC (63 aa)) the chain is Cytoplasmic. Residues 64–86 (FLISASAIAGFLFGYDTGVVGVA) form a helical membrane-spanning segment. Residues 87-105 (LPLVGTDLGGSVLSSSQQE) lie on the Extracellular side of the membrane. The chain crosses the membrane as a helical span at residues 106-126 (IITAGTTIGAIFGSAILGGWG). Residues 127-132 (DRLGRK) are Cytoplasmic-facing. Residues 133–153 (VAILIADVFFTVGAVLIAASY) form a helical membrane-spanning segment. At 154–162 (SVPQMIVGR) the chain is on the extracellular side. The helical transmembrane segment at 163 to 183 (IVLGVGVGGAAAIAPLFITET) threads the bilayer. Over 184–192 (APTAVRGRC) the chain is Cytoplasmic. Residues 193–213 (IGVNAFFIPFGQVISEAIGAG) form a helical membrane-spanning segment. Over 214–222 (VQDMKNGWR) the chain is Extracellular. A helical membrane pass occupies residues 223-243 (LLFALGAVPSLFQLILFHYLP). At 244 to 325 (ESPRILILRG…TVSLIQMAGQ (82 aa)) the chain is on the cytoplasmic side. Residues 326-346 (LSGFNTLLYYAGTLFSLLGLT) traverse the membrane as a helical segment. Over 347-349 (NPA) the chain is Extracellular. A helical transmembrane segment spans residues 350 to 370 (LGGLIPAGTNAFFVLVGMTLV). The Cytoplasmic portion of the chain corresponds to 371-376 (DKVGRR). Residues 377 to 397 (GLLMFGVPIMLAGLVWNIVAF) traverse the membrane as a helical segment. Residues 398–417 (HYLCIPTGGLLDTSYKYDTK) lie on the Extracellular side of the membrane. A helical membrane pass occupies residues 418-438 (LVGIVIGGIVFFTTGFGLTYS). The Cytoplasmic portion of the chain corresponds to 439–454 (HLAWYQSEFLALEVRS). Residues 455-475 (VGSGIATTANWVANLVVSVSY) traverse the membrane as a helical segment. The Extracellular segment spans residues 476-485 (LTELETLTPS). A helical transmembrane segment spans residues 486-506 (GTYGLYLGFSVVFFIFAVFCY). Over 507–590 (PETKQLSIDE…NGAKRFPISR (84 aa)) the chain is Cytoplasmic.

This sequence belongs to the major facilitator superfamily. Sugar transporter (TC 2.A.1.1) family.

The protein localises to the cell membrane. It carries out the reaction myo-inositol(out) + H(+)(out) = myo-inositol(in) + H(+)(in). In terms of biological role, major transporter for myo-inositol. Plays a role in the traversal of the host blood-brain barrier. The sequence is that of Myo-inositol transporter 3C from Cryptococcus neoformans var. grubii serotype A (strain H99 / ATCC 208821 / CBS 10515 / FGSC 9487) (Filobasidiella neoformans var. grubii).